The following is a 1118-amino-acid chain: Pleckstrin homology domain-containing family A member 7 (1118 aa).

2 WW domains span residues 8–41 (DTLP…HPRT) and 53–86 (SDLP…HPVT). Residues 100–113 (EEPHPHMSKPERNQ) show a composition bias toward basic and acidic residues. The disordered stretch occupies residues 100–145 (EEPHPHMSKPERNQRPSSMVSETSTAGTTSTLEAKPGPKIVKSSSK). Residues 114–131 (RPSSMVSETSTAGTTSTL) show a composition bias toward polar residues. The PH domain maps to 163 to 281 (PVVVRGWLHK…WVRAMNQAAQ (119 aa)). Composition is skewed to basic and acidic residues over residues 334 to 355 (FNRR…EGRR) and 434 to 443 (HWTKAQKGDG). Disordered regions lie at residues 334–512 (FNRR…RRAH) and 528–629 (QFRH…RRSM). Residues 452-481 (LPRQGPSQPLSFPENYQSLPKSTRHLSGSS) are compositionally biased toward polar residues. The span at 494–512 (YAQDRASHLKMSSEERRAH) shows a compositional bias: basic and acidic residues. Ser533, Ser542, Ser566, Ser601, Ser605, and Ser609 each carry phosphoserine. Residues 535-693 (TAPIGAGSPE…AESDIDVKLS (159 aa)) are interaction with CTNND1. Over residues 564–579 (PPSPSDIPPPGPPRPF) the composition is skewed to pro residues. Over residues 586 to 602 (TPAERVTVKPPEQRRSV) the composition is skewed to basic and acidic residues. Residues 697-798 (EQDRILQDLE…LQEQHRRAFF (102 aa)) are a coiled coil. Disordered regions lie at residues 839 to 873 (KTVP…VRTP) and 886 to 968 (VPYR…EQGQ). 2 positions are modified to phosphoserine: Ser857 and Ser864. Residue Thr867 is modified to Phosphothreonine. 3 positions are modified to phosphoserine: Ser868, Ser900, and Ser904. A compositionally biased stretch (pro residues) spans 930–939 (DQPPAVPPLP). Residues 955 to 966 (RQSDERKRDREQ) are compositionally biased toward basic and acidic residues. Residues Ser983 and Leu990 each carry the phosphoserine modification. Residues 1003-1024 (GSESRYQTLPGRGLSGSTSRLQ) are disordered. Positions 1064–1091 (QRGKMSAEEQLERMKRHQKALVRERKRT) form a coiled coil.

In terms of assembly, interacts with CAMSAP3 and CTNND1. Interacts (via WW domains) with TSPAN33 (via cytoplasmic domain) and with PDZD11; the interaction with TSPAN33 is dependent on PDZD11 being bound to PLEKHA7 and facilitates the docking of ADAM10 to zonula adherens through interaction of TSPAN33 with ADAM10. As to expression, expressed in kidney and lung (at protein level).

The protein resides in the cell junction. It is found in the adherens junction. The protein localises to the cytoplasm. It localises to the cytoskeleton. Its subcellular location is the microtubule organizing center. The protein resides in the centrosome. In terms of biological role, required for zonula adherens biogenesis and maintenance. Acts via its interaction with CAMSAP3, which anchors microtubules at their minus-ends to zonula adherens, leading to the recruitment of KIFC3 kinesin to the junctional site. Mediates docking of ADAM10 to zonula adherens through a PDZD11-dependent interaction with the ADAM10-binding protein TSPAN33. In Mus musculus (Mouse), this protein is Pleckstrin homology domain-containing family A member 7 (Plekha7).